Reading from the N-terminus, the 130-residue chain is Transcription antitermination protein NusB (130 aa).

This sequence belongs to the NusB family.

Functionally, involved in transcription antitermination. Required for transcription of ribosomal RNA (rRNA) genes. Binds specifically to the boxA antiterminator sequence of the ribosomal RNA (rrn) operons. The chain is Transcription antitermination protein NusB from Bacillus cereus (strain ATCC 10987 / NRS 248).